Here is an 838-residue protein sequence, read N- to C-terminus: MIPRPPSDDRANQNGDGSKKTGAKKTGAKKAAAAKKTAGKKATPAAKATAAKGAVTKKTGKGKATAKKAVADKAAAKATVPQQAVPKQAVSKRAVSKKAVPRKAVVKAALDIPEAPVSPAVAPDDRDRLLSGTHHAPHSVLGAHPVPGGVAFRVLRPYALSVTVVTDDLRTELHDDGAGFFTGLLPLRAVPDYRLHVAYEGTVHETEDAYRFLPALGELDLHLINEGRHEELWTALGAEPMTHQGVPGTRFTVWAPNARGVRLAGTFNFWDATAFPLRSLGSSGVWELFVPGVGEGELYKFEITRPDGSKTLRADPVARRTEAPPRTSSIVHASHYAWADEAWMAARGERPVHESPFSVYEVHLPSWRPGLTYRQLAEQLPAYVADLGFTHVELLPVAEHPFGGSWGYQVTGFYAPTARLGTPDDFKYLVDALHRAGVGVLMDWVPAHFPRDDWALAEFDGRPLYEHEDPLRAAHPDWGTLEFDYGRREVRNFLVANAVYWCEEFHIDGLRVDAVASMLYLDYSREEGQWSPNEFGGRENLDAVAFLQEMNATVYRRVPGVVTIAEESTAWEGVTRATHDNGLGFGLKWNMGWMHDSLGYVQHEPVHRRFHHHEMTFSMVYAYSENYVLPISHDEVVHGKGSLVSKMPGDWWQQRATERAYLGFMWAHPGKQLLFMGQEFAQGAEWSETHGPDWWLLDPAYGAEPDHRGMRDLVRDLNTVYRHEPALWERDTDPSGFAWVTGDAVEDNVFAFLRHAADGTPLLAVSNFSPVVRHDYRLGVPDDIPAWHETLNTDGARYGGSDVTNPHPVKPEPQGRHGRPASIRLTLPPLSTLWLRPA.

Positions M1 to A11 are enriched in basic and acidic residues. Disordered regions lie at residues M1–K98 and P116–G142. Positions K29 to K57 are enriched in low complexity. D513 acts as the Nucleophile in catalysis. The Proton donor role is filled by E566. The tract at residues T793–S822 is disordered.

This sequence belongs to the glycosyl hydrolase 13 family. GlgB subfamily. In terms of assembly, monomer.

The enzyme catalyses Transfers a segment of a (1-&gt;4)-alpha-D-glucan chain to a primary hydroxy group in a similar glucan chain.. It participates in glycan biosynthesis; glycogen biosynthesis. In terms of biological role, catalyzes the formation of the alpha-1,6-glucosidic linkages in glycogen by scission of a 1,4-alpha-linked oligosaccharide from growing alpha-1,4-glucan chains and the subsequent attachment of the oligosaccharide to the alpha-1,6 position. This chain is 1,4-alpha-glucan branching enzyme GlgB 1, found in Streptomyces avermitilis (strain ATCC 31267 / DSM 46492 / JCM 5070 / NBRC 14893 / NCIMB 12804 / NRRL 8165 / MA-4680).